Consider the following 380-residue polypeptide: Actinidain (380 aa).

Residues 1 to 24 form the signal peptide; the sequence is MGLPKSFVSMSLLFFSTLLILSLA. Residues 25-126 constitute a propeptide, activation peptide; the sequence is FNAKNLTQRT…NRYEPRVGQV (102 aa). N-linked (GlcNAc...) asparagine glycans are attached at residues Asn-29, Asn-81, and Asn-111. Disulfide bonds link Cys-148/Cys-191, Cys-182/Cys-224, and Cys-282/Cys-332. The active site involves Cys-151. Residues His-288 and Asn-308 contribute to the active site.

It belongs to the peptidase C1 family. Fruit, present in small cells of the outer pericarp of mature fruit, but not large cells.

The enzyme catalyses Specificity close to that of papain.. Cysteine protease responsible for the cleavage of kiwellin into kissper and KiTH. This Actinidia deliciosa (Kiwi) protein is Actinidain.